The primary structure comprises 310 residues: Homeobox protein Hox-A13a (310 aa).

The homeobox DNA-binding region spans 244–303 (GRKKRVPYTKVQLKELEREYATNKFITKDKRRRISAQTNLSERQVTIWFQNRRVKEKKVV).

The protein belongs to the Abd-B homeobox family.

Its subcellular location is the nucleus. Sequence-specific transcription factor which is part of a developmental regulatory system that provides cells with specific positional identities on the anterior-posterior axis. This Danio rerio (Zebrafish) protein is Homeobox protein Hox-A13a (hoxa13a).